A 589-amino-acid chain; its full sequence is Protein kinase G11A (589 aa).

The segment at 1 to 167 (MASKAMPRAP…SACSSISSVT (167 aa)) is disordered. 3 stretches are compositionally biased toward polar residues: residues 15 to 36 (NLQS…SPSK), 46 to 55 (AESSKPNSEV), and 63 to 76 (TQHQ…TGSN). The segment covering 91–100 (RLADEEKGVV) has biased composition (basic and acidic residues). The span at 142–165 (SSSRCRPSTSSDVSDESACSSISS) shows a compositional bias: low complexity. Positions 195 to 533 (FKLLKKLGCG…ATEIKQHPFF (339 aa)) constitute a Protein kinase domain. Residues 201 to 209 (LGCGDIGSV) and lysine 224 contribute to the ATP site. Residue aspartate 320 is the Proton acceptor of the active site. The disordered stretch occupies residues 551-589 (RPVEIERPPKQPVSTSEPAAAPSDAAQKSSDSYLEFDFF).

This sequence belongs to the protein kinase superfamily. Ser/Thr protein kinase family.

The catalysed reaction is L-seryl-[protein] + ATP = O-phospho-L-seryl-[protein] + ADP + H(+). It carries out the reaction L-threonyl-[protein] + ATP = O-phospho-L-threonyl-[protein] + ADP + H(+). In terms of biological role, may play a role in the regulation of metabolism and signal transduction processes. The sequence is that of Protein kinase G11A from Oryza sativa subsp. indica (Rice).